The primary structure comprises 278 residues: Small ribosomal subunit protein uS3 (278 aa).

Residues 39–107 (LRKAISKKYV…KVQLNIVEIS (69 aa)) enclose the KH type-2 domain. The disordered stretch occupies residues 255 to 278 (AEIPAEEKPKRVVKKAENITKEEE).

It belongs to the universal ribosomal protein uS3 family. As to quaternary structure, part of the 30S ribosomal subunit. Forms a tight complex with proteins S10 and S14.

In terms of biological role, binds the lower part of the 30S subunit head. Binds mRNA in the 70S ribosome, positioning it for translation. The sequence is that of Small ribosomal subunit protein uS3 from Dehalococcoides mccartyi (strain ATCC BAA-2100 / JCM 16839 / KCTC 5957 / BAV1).